The sequence spans 152 residues: MTHIIIDGDACPVVDSIIDLTTETGIFVTIIRSFSHFSNQLYPPHVSTLYVDDGPDAVDYKIVQLSTKDDIVVTQDYGLASLLVDKVLIVMHHNGKIYNSKNIQQLLDKRYMNAQIRKQGGRHKGPPPFTKQDQKVFEQSLLKVIHRIKELD.

The protein belongs to the UPF0178 family.

The polypeptide is UPF0178 protein SAS0646 (Staphylococcus aureus (strain MSSA476)).